The chain runs to 85 residues: UPF0297 protein LBUL_1485 (85 aa).

The protein belongs to the UPF0297 family.

This Lactobacillus delbrueckii subsp. bulgaricus (strain ATCC BAA-365 / Lb-18) protein is UPF0297 protein LBUL_1485.